The sequence spans 114 residues: Fumarate reductase subunit D (114 aa).

3 consecutive transmembrane segments (helical) span residues 24–44, 50–70, and 92–112; these read VSAIFLPVVILIIGLLLPFGL, LITFAYSWIGKLVILVLTIFP, and GGFIFYGLATIYTVWVLFAVI.

Belongs to the FrdD family. Part of an enzyme complex containing four subunits: a flavoprotein (FrdA), an iron-sulfur protein (FrdB), and two hydrophobic anchor proteins (FrdC and FrdD).

Its subcellular location is the cell inner membrane. Its function is as follows. Anchors the catalytic components of the fumarate reductase complex to the cell membrane, binds quinones. This Haemophilus influenzae (strain 86-028NP) protein is Fumarate reductase subunit D.